Reading from the N-terminus, the 436-residue chain is UDP-N-acetylmuramate--L-alanine ligase (436 aa).

111-117 (GTHGKTS) serves as a coordination point for ATP.

Belongs to the MurCDEF family.

It is found in the cytoplasm. The catalysed reaction is UDP-N-acetyl-alpha-D-muramate + L-alanine + ATP = UDP-N-acetyl-alpha-D-muramoyl-L-alanine + ADP + phosphate + H(+). Its pathway is cell wall biogenesis; peptidoglycan biosynthesis. Cell wall formation. The sequence is that of UDP-N-acetylmuramate--L-alanine ligase from Pediococcus pentosaceus (strain ATCC 25745 / CCUG 21536 / LMG 10740 / 183-1w).